The sequence spans 138 residues: Cystatin-11 (138 aa).

An N-terminal signal peptide occupies residues 1–26 (MMAEPWQALQLLLAILLTLMALPYQA). 2 disulfide bridges follow: Cys-94-Cys-102 and Cys-115-Cys-135. N-linked (GlcNAc...) asparagine glycosylation occurs at Asn-132.

Belongs to the cystatin family. As to expression, detected in the epithelium and lumen of the epididymis, and in sperm (at protein level).

It localises to the secreted. Its function is as follows. Has antibacterial activity against the Gram-negative bacteria E.coli. May play a role in sperm maturation and fertilization. This Homo sapiens (Human) protein is Cystatin-11 (CST11).